A 287-amino-acid chain; its full sequence is Ribosomal RNA small subunit methyltransferase A (287 aa).

Positions 18, 20, 45, 66, 91, and 118 each coordinate S-adenosyl-L-methionine.

This sequence belongs to the class I-like SAM-binding methyltransferase superfamily. rRNA adenine N(6)-methyltransferase family. RsmA subfamily.

It localises to the cytoplasm. It carries out the reaction adenosine(1518)/adenosine(1519) in 16S rRNA + 4 S-adenosyl-L-methionine = N(6)-dimethyladenosine(1518)/N(6)-dimethyladenosine(1519) in 16S rRNA + 4 S-adenosyl-L-homocysteine + 4 H(+). Functionally, specifically dimethylates two adjacent adenosines (A1518 and A1519) in the loop of a conserved hairpin near the 3'-end of 16S rRNA in the 30S particle. May play a critical role in biogenesis of 30S subunits. This chain is Ribosomal RNA small subunit methyltransferase A, found in Haemophilus influenzae (strain ATCC 51907 / DSM 11121 / KW20 / Rd).